The following is a 140-amino-acid chain: uncharacterized protein (140 aa).

It belongs to the asfivirus D129L family.

This is an uncharacterized protein from African swine fever virus (isolate Pig/Kenya/KEN-50/1950) (ASFV).